Reading from the N-terminus, the 217-residue chain is Ras-related protein Rab-19 (217 aa).

11 residues coordinate GTP: serine 26, valine 28, glycine 29, lysine 30, threonine 31, cysteine 32, tyrosine 42, serine 43, glutamate 44, serine 45, and threonine 49. Threonine 31 is a Mg(2+) binding site. Residues 39–54 carry the Switch 1 motif; the sequence is SGVYSESQQNTIGVDF. Positions 49 and 72 each coordinate Mg(2+). The short motif at 74-89 is the Switch 2 element; sequence AGQERFRTITQSYYRS. The GTP site is built by glycine 75, asparagine 130, lysine 131, aspartate 133, serine 161, alanine 162, and lysine 163. S-geranylgeranyl cysteine attachment occurs at residues cysteine 215 and cysteine 217. The residue at position 217 (cysteine 217) is a Cysteine methyl ester.

The protein belongs to the small GTPase superfamily. Rab family. Requires Mg(2+) as cofactor.

The protein resides in the cell membrane. It carries out the reaction GTP + H2O = GDP + phosphate + H(+). With respect to regulation, regulated by guanine nucleotide exchange factors (GEFs) which promote the exchange of bound GDP for free GTP. Regulated by GTPase activating proteins (GAPs) which increase the GTP hydrolysis activity. Inhibited by GDP dissociation inhibitors (GDIs). In terms of biological role, the small GTPases Rab are key regulators of intracellular membrane trafficking, from the formation of transport vesicles to their fusion with membranes. Rabs cycle between an inactive GDP-bound form and an active GTP-bound form that is able to recruit to membranes different set of downstream effectors directly responsible for vesicle formation, movement, tethering and fusion. This is Ras-related protein Rab-19 from Rattus norvegicus (Rat).